We begin with the raw amino-acid sequence, 331 residues long: Cathepsin S (331 aa).

A signal peptide spans 1–16 (MKRLVCVLLVCSSAVA). Positions 17-114 (QLHKDPTLDH…ITYKSNPNRI (98 aa)) are cleaved as a propeptide — activation peptide. An N-linked (GlcNAc...) asparagine glycan is attached at asparagine 104. 4 disulfide bridges follow: cysteine 126–cysteine 224, cysteine 136–cysteine 180, cysteine 170–cysteine 213, and cysteine 272–cysteine 320. Cysteine 139 is an active-site residue. Active-site residues include histidine 278 and asparagine 298.

Belongs to the peptidase C1 family. In terms of assembly, monomer.

It localises to the lysosome. Its subcellular location is the secreted. The protein resides in the cytoplasmic vesicle. The protein localises to the phagosome. It catalyses the reaction Similar to cathepsin L, but with much less activity on Z-Phe-Arg-|-NHMec, and more activity on the Z-Val-Val-Arg-|-Xaa compound.. Functionally, thiol protease. Key protease responsible for the removal of the invariant chain from MHC class II molecules and MHC class II antigen presentation. The bond-specificity of this proteinase is in part similar to the specificities of cathepsin L. The polypeptide is Cathepsin S (CTSS) (Homo sapiens (Human)).